The following is a 414-amino-acid chain: Serine--tRNA ligase (414 aa).

An L-serine-binding site is contributed by 230–232; that stretch reads TAE. 261-263 lines the ATP pocket; the sequence is RKE. Glu284 lines the L-serine pocket. An ATP-binding site is contributed by 348–351; that stretch reads EISS. Position 382 (Ser382) interacts with L-serine.

Belongs to the class-II aminoacyl-tRNA synthetase family. Type-1 seryl-tRNA synthetase subfamily. In terms of assembly, homodimer. The tRNA molecule binds across the dimer.

The protein localises to the cytoplasm. The enzyme catalyses tRNA(Ser) + L-serine + ATP = L-seryl-tRNA(Ser) + AMP + diphosphate + H(+). It carries out the reaction tRNA(Sec) + L-serine + ATP = L-seryl-tRNA(Sec) + AMP + diphosphate + H(+). The protein operates within aminoacyl-tRNA biosynthesis; selenocysteinyl-tRNA(Sec) biosynthesis; L-seryl-tRNA(Sec) from L-serine and tRNA(Sec): step 1/1. Catalyzes the attachment of serine to tRNA(Ser). Is also able to aminoacylate tRNA(Sec) with serine, to form the misacylated tRNA L-seryl-tRNA(Sec), which will be further converted into selenocysteinyl-tRNA(Sec). The sequence is that of Serine--tRNA ligase from Sulfurovum sp. (strain NBC37-1).